Here is a 92-residue protein sequence, read N- to C-terminus: YcgL domain-containing protein VC_1957 (92 aa).

The YcgL domain maps to 1–84; sequence MLCSIYKSPK…PPENLLEQHK (84 aa). The segment at 69–92 is disordered; sequence FLQLPPPPENLLEQHKERKARQTP.

In Vibrio cholerae serotype O1 (strain ATCC 39315 / El Tor Inaba N16961), this protein is YcgL domain-containing protein VC_1957.